The chain runs to 297 residues: Phosphoribosylaminoimidazole-succinocarboxamide synthase (297 aa).

This sequence belongs to the SAICAR synthetase family.

It catalyses the reaction 5-amino-1-(5-phospho-D-ribosyl)imidazole-4-carboxylate + L-aspartate + ATP = (2S)-2-[5-amino-1-(5-phospho-beta-D-ribosyl)imidazole-4-carboxamido]succinate + ADP + phosphate + 2 H(+). The protein operates within purine metabolism; IMP biosynthesis via de novo pathway; 5-amino-1-(5-phospho-D-ribosyl)imidazole-4-carboxamide from 5-amino-1-(5-phospho-D-ribosyl)imidazole-4-carboxylate: step 1/2. The chain is Phosphoribosylaminoimidazole-succinocarboxamide synthase from Rhodococcus erythropolis (strain PR4 / NBRC 100887).